The sequence spans 178 residues: ATP-dependent protease subunit HslV (178 aa).

Thr-7 is a catalytic residue. Gly-162, Cys-165, and Thr-168 together coordinate Na(+).

This sequence belongs to the peptidase T1B family. HslV subfamily. In terms of assembly, a double ring-shaped homohexamer of HslV is capped on each side by a ring-shaped HslU homohexamer. The assembly of the HslU/HslV complex is dependent on binding of ATP.

It localises to the cytoplasm. It catalyses the reaction ATP-dependent cleavage of peptide bonds with broad specificity.. Allosterically activated by HslU binding. In terms of biological role, protease subunit of a proteasome-like degradation complex believed to be a general protein degrading machinery. This Sulfurihydrogenibium sp. (strain YO3AOP1) protein is ATP-dependent protease subunit HslV.